Consider the following 336-residue polypeptide: Holliday junction branch migration complex subunit RuvB (336 aa).

Positions 4–184 (ADRLVSADSS…FGIVQRLEFY (181 aa)) are large ATPase domain (RuvB-L). ATP-binding positions include isoleucine 23, arginine 24, glycine 65, lysine 68, threonine 69, threonine 70, 131-133 (EDY), arginine 174, tyrosine 184, and arginine 221. Threonine 69 provides a ligand contact to Mg(2+). The tract at residues 185 to 255 (QIPDLQHIVS…IAAQALDMLN (71 aa)) is small ATPAse domain (RuvB-S). The interval 258–336 (AEGFDYMDRK…HFGITPPEMP (79 aa)) is head domain (RuvB-H). Residues arginine 294, arginine 313, and arginine 318 each coordinate DNA.

The protein belongs to the RuvB family. In terms of assembly, homohexamer. Forms an RuvA(8)-RuvB(12)-Holliday junction (HJ) complex. HJ DNA is sandwiched between 2 RuvA tetramers; dsDNA enters through RuvA and exits via RuvB. An RuvB hexamer assembles on each DNA strand where it exits the tetramer. Each RuvB hexamer is contacted by two RuvA subunits (via domain III) on 2 adjacent RuvB subunits; this complex drives branch migration. In the full resolvosome a probable DNA-RuvA(4)-RuvB(12)-RuvC(2) complex forms which resolves the HJ.

The protein localises to the cytoplasm. It carries out the reaction ATP + H2O = ADP + phosphate + H(+). The RuvA-RuvB-RuvC complex processes Holliday junction (HJ) DNA during genetic recombination and DNA repair, while the RuvA-RuvB complex plays an important role in the rescue of blocked DNA replication forks via replication fork reversal (RFR). RuvA specifically binds to HJ cruciform DNA, conferring on it an open structure. The RuvB hexamer acts as an ATP-dependent pump, pulling dsDNA into and through the RuvAB complex. RuvB forms 2 homohexamers on either side of HJ DNA bound by 1 or 2 RuvA tetramers; 4 subunits per hexamer contact DNA at a time. Coordinated motions by a converter formed by DNA-disengaged RuvB subunits stimulates ATP hydrolysis and nucleotide exchange. Immobilization of the converter enables RuvB to convert the ATP-contained energy into a lever motion, pulling 2 nucleotides of DNA out of the RuvA tetramer per ATP hydrolyzed, thus driving DNA branch migration. The RuvB motors rotate together with the DNA substrate, which together with the progressing nucleotide cycle form the mechanistic basis for DNA recombination by continuous HJ branch migration. Branch migration allows RuvC to scan DNA until it finds its consensus sequence, where it cleaves and resolves cruciform DNA. This Klebsiella pneumoniae (strain 342) protein is Holliday junction branch migration complex subunit RuvB.